A 180-amino-acid chain; its full sequence is Membrane protein UL121 (180 aa).

Positions 1 to 27 are cleaved as a signal peptide; that stretch reads MWGCGWSRILVLLLLMCMALMARGTYG. A helical transmembrane segment spans residues 143 to 163; sequence LGLLYAVCLILSFSIVTAALW.

The protein belongs to the HHV-5 UL121 protein family.

The protein resides in the host membrane. The sequence is that of Membrane protein UL121 (UL121) from Human cytomegalovirus (strain Merlin) (HHV-5).